The sequence spans 142 residues: Transcription antitermination protein NusB (142 aa).

This sequence belongs to the NusB family.

Its function is as follows. Involved in transcription antitermination. Required for transcription of ribosomal RNA (rRNA) genes. Binds specifically to the boxA antiterminator sequence of the ribosomal RNA (rrn) operons. The protein is Transcription antitermination protein NusB of Borrelia garinii subsp. bavariensis (strain ATCC BAA-2496 / DSM 23469 / PBi) (Borreliella bavariensis).